Here is a 116-residue protein sequence, read N- to C-terminus: Iron-sulfur cluster insertion protein ErpA (116 aa).

Residues cysteine 44, cysteine 108, and cysteine 110 each coordinate iron-sulfur cluster.

This sequence belongs to the HesB/IscA family. As to quaternary structure, homodimer. Iron-sulfur cluster serves as cofactor.

Its function is as follows. Required for insertion of 4Fe-4S clusters for at least IspG. The polypeptide is Iron-sulfur cluster insertion protein ErpA (Pseudomonas fluorescens (strain Pf0-1)).